The chain runs to 367 residues: DNA replication and repair protein RecF (367 aa).

30–37 (GANGSGKT) contributes to the ATP binding site.

This sequence belongs to the RecF family.

The protein localises to the cytoplasm. Functionally, the RecF protein is involved in DNA metabolism; it is required for DNA replication and normal SOS inducibility. RecF binds preferentially to single-stranded, linear DNA. It also seems to bind ATP. In Pseudomonas entomophila (strain L48), this protein is DNA replication and repair protein RecF.